Consider the following 401-residue polypeptide: Imidazolonepropionase (401 aa).

2 residues coordinate Fe(3+): His70 and His72. Zn(2+) contacts are provided by His70 and His72. 4-imidazolone-5-propanoate-binding residues include Arg79, Tyr142, and His175. Tyr142 lines the N-formimidoyl-L-glutamate pocket. His238 contributes to the Fe(3+) binding site. His238 is a Zn(2+) binding site. Gln241 is a binding site for 4-imidazolone-5-propanoate. Asp313 is a Fe(3+) binding site. Position 313 (Asp313) interacts with Zn(2+). Asn315 and Gly317 together coordinate N-formimidoyl-L-glutamate. Thr318 contributes to the 4-imidazolone-5-propanoate binding site.

It belongs to the metallo-dependent hydrolases superfamily. HutI family. It depends on Zn(2+) as a cofactor. The cofactor is Fe(3+).

The protein localises to the cytoplasm. The catalysed reaction is 4-imidazolone-5-propanoate + H2O = N-formimidoyl-L-glutamate. The protein operates within amino-acid degradation; L-histidine degradation into L-glutamate; N-formimidoyl-L-glutamate from L-histidine: step 3/3. Catalyzes the hydrolytic cleavage of the carbon-nitrogen bond in imidazolone-5-propanoate to yield N-formimidoyl-L-glutamate. It is the third step in the universal histidine degradation pathway. The protein is Imidazolonepropionase of Xanthomonas axonopodis pv. citri (strain 306).